A 113-amino-acid polypeptide reads, in one-letter code: Single-stranded DNA-binding protein B (113 aa).

The SSB domain maps to 1 to 104; sequence MFNQVMLVGR…VLADTVRFMD (104 aa). Y82 carries the post-translational modification Phosphotyrosine.

In terms of assembly, homotetramer. Post-translationally, phosphorylated by YwqD, which increases ssDNA affinity; dephosphorylated by YwqE.

The protein localises to the cytoplasm. Functionally, not essential for replication of the chromosome, but is required for optimal competence. Binds ssDNA, binding is facilitated by DprA, acts as an accessory factor for homologous DNA strand exchange. This Bacillus subtilis (strain 168) protein is Single-stranded DNA-binding protein B (ssbB).